A 588-amino-acid chain; its full sequence is Disabled homolog 1 (588 aa).

The disordered stretch occupies residues 1–26 (MSTETELQVAVKTSAKKDSRKKGQDR). The span at 15-26 (AKKDSRKKGQDR) shows a compositional bias: basic and acidic residues. One can recognise a PID domain in the interval 36 to 189 (KGEGVRYKAK…CEQAVYQTIL (154 aa)). 3 positions are modified to phosphotyrosine: Tyr198, Tyr220, and Tyr232. Disordered regions lie at residues 224–243 (TSQK…NSQP), 420–444 (LATV…QKMG), 451–470 (FQMV…PSLT), and 502–588 (LTPV…QDGS). The span at 424–436 (PGTNDSARSSPQS) shows a compositional bias: polar residues. 2 stretches are compositionally biased toward low complexity: residues 503 to 512 (TPVTSTTPST) and 523 to 534 (SSPSKSSASHVS). The residue at position 524 (Ser524) is a Phosphoserine; by CDK5. The span at 537–546 (TADDIFEEGF) shows a compositional bias: acidic residues.

As to quaternary structure, associates with the SH2 domains of SRC, FYN and ABL. Interacts (phosphorylated on tyrosine residues) with CRK and CRKL (via respective SH2 domain). Interacts with SIAH1, LRP8 and VLDLR. Interacts with LRP1. Interacts with APLP1 (via NPXY motif). Interacts with DAB2IP. Interacts with ZSWIM8. In terms of processing, phosphorylated by FYN on Tyr-198 and Tyr-220 upon reelin induction in embryonic neurons. Also found phosphorylated on Tyr-232 upon reelin induction. Also phosphorylated on Ser-524 independently of reelin signaling. Ubiquitinated by various cullin-5-RING E3 ubiquitin-protein ligase complexes (ECS complexes) following ligand-binding and phosphorylation, leading to its degradation. Ubiquitinated by the ECS(SOCS7) complex in the cortical plate of the developing cerebral cortex following ligand-binding and phosphorylation by FYN, leading to its degradation by the proteasome. Recognized by ZSWIM8 through a disorder targets misorder mechanism that eliminates misfolded DAB1 via ubiquitination and proteasomal degradation. As to expression, expressed mainly in brain. Specifically expressin in cortical neurons.

Its subcellular location is the cytoplasm. Its function is as follows. Signaling adapter of the reelin-mediated signaling pathway, which regulates the migration and differentiation of postmitotic neurons during brain development. Mediates intracellular transduction of Reelin signaling following reelin (RELN)-binding to its receptor: acts by docking proteins through its phosphotyrosine residues and PID domain. In Mus musculus (Mouse), this protein is Disabled homolog 1.